The chain runs to 307 residues: MSSLGRILSVSYPPDPYTWRFSQYKLSSSLGRNRRLRWRFTALDPESSSLDSESSADKFASGFCIIEGPETVQDFAKMQLQEIQDNIRSRRNKIFLHMEEVRRLRIQQRIKNTELGIINEEQEHELPNFPSFIPFLPPLTAANLKVYYATCFSLIAGIILFGGLLAPTLELKLGIGGTSYADFIQSLHLPMQLSQVDPIVASFSGGAVGVISALMVVEVNNVKQQEHKRCKYCLGTGYLACARCSSTGALVLTEPVSAIAGGNHSLSPPKTERCSNCSGAGKVMCPTCLCTGMAMASEHDPRIDPFD.

The N-terminal 55 residues, 1–55 (MSSLGRILSVSYPPDPYTWRFSQYKLSSSLGRNRRLRWRFTALDPESSSLDSESS), are a transit peptide targeting the chloroplast. Lys58 is covalently cross-linked (Glycyl lysine isopeptide (Lys-Gly) (interchain with G-Cter in ubiquitin)). 2 consecutive transmembrane segments (helical) span residues 146–166 (VYYA…GLLA) and 199–219 (IVAS…VVEV). The interval 208–299 (VGVISALMVV…CTGMAMASEH (92 aa)) is CR-type-like. The stretch at 230–237 (CKYCLGTG) is one CXXCXGXG motif repeat. Residues 241 to 248 (CARCSSTG) form a CXXCXXXG motif repeat. The stretch at 274-281 (CSNCSGAG) is one CXXCXGXG motif repeat. The CXXCXXXG motif repeat unit spans residues 285 to 292 (CPTCLCTG).

It belongs to the orange-like family. As to quaternary structure, interacts with the phytoene synthase PSY1 in chloroplast. Binds to the eukaryotic release factor eRF1-2. Interacts with the transcription factor TCP14 in the nucleus to repress chloroplast biogenesis in etiolated seedlings. Associates to the E2 ubiquitin-conjugating enzyme UBC19. In terms of processing, ubiquitination at K-58 by UBC19 is essential for nuclear localization.

The protein resides in the plastid. The protein localises to the chloroplast membrane. Its subcellular location is the nucleus. It is found in the cytoplasm. Functionally, involved in chromoplast differentiation. Associated with a cellular process that triggers the differentiation of pro-plastids or other non-colored plastids into chromoplasts for carotenoid accumulation. Is associated with carotenoid accumulation in chromoplasts. Functions as a major regulator of the phytoene synthase PSY1 protein level and activity. Modulates carotenoid biosynthesis by means of post-transcriptional regulation of PSY1. Modulates carotenoid biosynthesis in part by up-regulating a series of endogenous carotenogenic genes. Regulates cell elongation in the petiole in an eRF1-2-dependent manner. Binds to and represses TCP14 transactivation activity, thus preventing early light-induced proteins (ELIPs, e.g. ELIP1 and ELIP2) expression and delaying chloroplast biogenesis (e.g. lower chlorophyll biosynthesis and slower development of thylakoid membranes) in germinating cotyledons and etiolated seedlings; reduced levels upon illumination combined to TCP14 accumulation derepress chloroplast biogenesis during deetiolation. The polypeptide is Protein ORANGE, chloroplastic (Arabidopsis thaliana (Mouse-ear cress)).